A 124-amino-acid chain; its full sequence is Small ribosomal subunit protein uS12c (124 aa).

Disordered regions lie at residues 1-28 and 104-124; these read MPTIQQLVRSERRKIHKKTKSPALQSCP and AAGVKDRRKSRSKYGTKKPKS. Composition is skewed to basic residues over residues 11-20 and 109-124; these read ERRKIHKKTK and DRRKSRSKYGTKKPKS.

It belongs to the universal ribosomal protein uS12 family. In terms of assembly, part of the 30S ribosomal subunit.

The protein resides in the plastid. The protein localises to the chloroplast. Its function is as follows. With S4 and S5 plays an important role in translational accuracy. Located at the interface of the 30S and 50S subunits. This is Small ribosomal subunit protein uS12c (rps12) from Pyropia yezoensis (Susabi-nori).